The following is a 180-amino-acid chain: MNTFATLAVLFCACLIGNCHGGYGGGGHGGYVQQGSYGQRSNGGAASAASSAAAAGNQRPVEIIAGGPRGGYGHGHEILRPIQLGYGGHSQRVPQHGSYGRRSGYGPRWTVQPAGATLLYPGQNNYRAYVSPPEYTKVVLPVRPAEPVAKLYIPENHYGSQQNYGTYAPQQSYNVEGPRY.

A signal peptide spans Met-1–Gly-21.

Belongs to the chorion protein S19 family.

Its subcellular location is the secreted. In terms of biological role, chorion membrane (egg shell) protein; plays a role in protecting the egg from the environment. The polypeptide is Chorion protein S19 (Cp19) (Drosophila subobscura (Fruit fly)).